We begin with the raw amino-acid sequence, 66 residues long: Large ribosomal subunit protein bL35 (66 aa).

Belongs to the bacterial ribosomal protein bL35 family.

In Phenylobacterium zucineum (strain HLK1), this protein is Large ribosomal subunit protein bL35.